The primary structure comprises 1097 residues: DNA-directed RNA polymerase subunit beta (1097 aa).

Positions Q1072–D1097 are disordered. Positions R1077–T1091 are enriched in polar residues.

The protein belongs to the RNA polymerase beta chain family. In cyanobacteria the RNAP catalytic core is composed of 2 alpha, 1 beta, 1 beta', 1 gamma and 1 omega subunit. When a sigma factor is associated with the core the holoenzyme is formed, which can initiate transcription.

It catalyses the reaction RNA(n) + a ribonucleoside 5'-triphosphate = RNA(n+1) + diphosphate. In terms of biological role, DNA-dependent RNA polymerase catalyzes the transcription of DNA into RNA using the four ribonucleoside triphosphates as substrates. In Prochlorococcus marinus (strain MIT 9215), this protein is DNA-directed RNA polymerase subunit beta.